A 349-amino-acid polypeptide reads, in one-letter code: Sexual stage-specific protein G37 (349 aa).

Residues 1–18 (MKLYLVTFLFFVIYKNKT) form the signal peptide. At 19 to 91 (FVDCVTKKQD…INQVSNNIMR (73 aa)) the chain is on the extracellular side. The chain crosses the membrane as a helical span at residues 92–112 (VYISLLSLFLFPYFSYIGIFG). Residues 113 to 117 (HSRNK) lie on the Cytoplasmic side of the membrane. The chain crosses the membrane as a helical span at residues 118 to 138 (ANLTLSSLLAYFALLVSFFLF). Over 139-140 (NG) the chain is Extracellular. Residues 141–161 (ILNIGFVTSLPLVVAVLIFIL) traverse the membrane as a helical segment. At 162-176 (GVSDCEINFLYKYTR) the chain is on the cytoplasmic side. The chain crosses the membrane as a helical span at residues 177-197 (YIFCFIISKLIYDVVTYISKD). Over 198–218 (GANIFDYGFSGHIYMNLLRGK) the chain is Extracellular. The helical transmembrane segment at 219–239 (YYIVLKLIHLIILSLISLIII) threads the bilayer. Topologically, residues 240–262 (KICPKIFSNNHLKSPISITFDKY) are cytoplasmic. Residues 263–283 (IISFLCSLPIATAISQVFYLL) form a helical membrane-spanning segment. The Extracellular segment spans residues 284 to 305 (SKTINPIDPSIFFMIPSSINFS). The helical transmembrane segment at 306 to 326 (STGTIFSLSIWILMSYLMTFL) threads the bilayer. The Cytoplasmic segment spans residues 327–349 (RNKVEADFNNILNKIPNNLPDFI).

Its subcellular location is the cell membrane. Involved in the development of male gametocytes. The protein is Sexual stage-specific protein G37 of Plasmodium berghei (strain Anka).